We begin with the raw amino-acid sequence, 185 residues long: ATP-dependent protease subunit HslV (185 aa).

Residue Thr2 is part of the active site. Residues Gly157, Cys160, and Thr163 each contribute to the Na(+) site.

This sequence belongs to the peptidase T1B family. HslV subfamily. As to quaternary structure, a double ring-shaped homohexamer of HslV is capped on each side by a ring-shaped HslU homohexamer. The assembly of the HslU/HslV complex is dependent on binding of ATP.

It is found in the cytoplasm. It catalyses the reaction ATP-dependent cleavage of peptide bonds with broad specificity.. With respect to regulation, allosterically activated by HslU binding. Its function is as follows. Protease subunit of a proteasome-like degradation complex believed to be a general protein degrading machinery. In Idiomarina loihiensis (strain ATCC BAA-735 / DSM 15497 / L2-TR), this protein is ATP-dependent protease subunit HslV.